We begin with the raw amino-acid sequence, 157 residues long: Transcription antitermination protein NusB (157 aa).

This sequence belongs to the NusB family.

Functionally, involved in transcription antitermination. Required for transcription of ribosomal RNA (rRNA) genes. Binds specifically to the boxA antiterminator sequence of the ribosomal RNA (rrn) operons. The polypeptide is Transcription antitermination protein NusB (Helicobacter hepaticus (strain ATCC 51449 / 3B1)).